The following is a 134-amino-acid chain: MSKSLTIIWQYLRAFVLIYACLYAGIFIAGLLPITIPGSIIGMLILFVLLALQIMPPQWVNPGCNILIRYMALLFVPIGVGVMQYWDLLRAQLGPVVISCAISTLVVFVVVSWSSHLVHGERKVIGQKEKKNDA.

Transmembrane regions (helical) follow at residues 5–25 (LTII…LYAG), 26–46 (IFIA…MLIL), 66–86 (ILIR…MQYW), and 93–113 (LGPV…VVSW).

It belongs to the UPF0299 family.

The protein resides in the cell inner membrane. The polypeptide is UPF0299 membrane protein KPK_1586 (Klebsiella pneumoniae (strain 342)).